We begin with the raw amino-acid sequence, 318 residues long: Beta-galactosidase small subunit (318 aa).

The protein belongs to the bacterial beta-galactosidase small subunit family. In terms of assembly, heterodimer of a large (LacL) and a small subunit (LacM).

It carries out the reaction Hydrolysis of terminal non-reducing beta-D-galactose residues in beta-D-galactosides.. Functionally, component of a beta-galactosidase. This is Beta-galactosidase small subunit from Lactobacillus helveticus (Lactobacillus suntoryeus).